We begin with the raw amino-acid sequence, 175 residues long: ATP synthase subunit b (175 aa).

The chain crosses the membrane as a helical span at residues 20–40 (LIFWTAVTFVIVLVILKKIAW).

The protein belongs to the ATPase B chain family. As to quaternary structure, F-type ATPases have 2 components, F(1) - the catalytic core - and F(0) - the membrane proton channel. F(1) has five subunits: alpha(3), beta(3), gamma(1), delta(1), epsilon(1). F(0) has four main subunits: a(1), b(2) and c(10-14). The alpha and beta chains form an alternating ring which encloses part of the gamma chain. F(1) is attached to F(0) by a central stalk formed by the gamma and epsilon chains, while a peripheral stalk is formed by the delta and b chains.

Its subcellular location is the cell inner membrane. Its function is as follows. F(1)F(0) ATP synthase produces ATP from ADP in the presence of a proton or sodium gradient. F-type ATPases consist of two structural domains, F(1) containing the extramembraneous catalytic core and F(0) containing the membrane proton channel, linked together by a central stalk and a peripheral stalk. During catalysis, ATP synthesis in the catalytic domain of F(1) is coupled via a rotary mechanism of the central stalk subunits to proton translocation. Functionally, component of the F(0) channel, it forms part of the peripheral stalk, linking F(1) to F(0). This chain is ATP synthase subunit b, found in Chlorobaculum parvum (strain DSM 263 / NCIMB 8327) (Chlorobium vibrioforme subsp. thiosulfatophilum).